We begin with the raw amino-acid sequence, 124 residues long: Small ribosomal subunit protein uS12 (124 aa).

The residue at position 89 (aspartate 89) is a 3-methylthioaspartic acid.

It belongs to the universal ribosomal protein uS12 family. In terms of assembly, part of the 30S ribosomal subunit. Contacts proteins S8 and S17. May interact with IF1 in the 30S initiation complex.

In terms of biological role, with S4 and S5 plays an important role in translational accuracy. Its function is as follows. Interacts with and stabilizes bases of the 16S rRNA that are involved in tRNA selection in the A site and with the mRNA backbone. Located at the interface of the 30S and 50S subunits, it traverses the body of the 30S subunit contacting proteins on the other side and probably holding the rRNA structure together. The combined cluster of proteins S8, S12 and S17 appears to hold together the shoulder and platform of the 30S subunit. This is Small ribosomal subunit protein uS12 from Shewanella oneidensis (strain ATCC 700550 / JCM 31522 / CIP 106686 / LMG 19005 / NCIMB 14063 / MR-1).